The following is a 260-amino-acid chain: Archaerhodopsin-1 (260 aa).

The propeptide occupies 1–6 (MDPIAL). The Extracellular portion of the chain corresponds to 7–20 (TAAVGADLLGDGRP). The chain crosses the membrane as a helical span at residues 21 to 42 (ETLWLGIGTLLMLIGTFYFIVK). Residues 43–51 (GWGVTDKEA) lie on the Cytoplasmic side of the membrane. The chain crosses the membrane as a helical span at residues 52 to 73 (REYYSITILVPGIASAAYLSMF). Residues 74–91 (FGIGLTEVQVGSEMLDIY) lie on the Extracellular side of the membrane. A helical membrane pass occupies residues 92-113 (YARYADWLFTTPLLLLDLALLA). The Cytoplasmic segment spans residues 114-116 (KVD). The helical transmembrane segment at 117–139 (RVSIGTLVGVDALMIVTGLVGAL) threads the bilayer. Residues 140 to 143 (SHTP) are Extracellular-facing. A helical membrane pass occupies residues 144-172 (LARYTWWLFSTICMIVVLYFLATSLRAAA). At 173–176 (KERG) the chain is on the cytoplasmic side. Residues 177–204 (PEVASTFNTLTALVLVLWTAYPILWIIG) form a helical membrane-spanning segment. Topologically, residues 205 to 212 (TEGAGVVG) are extracellular. A helical transmembrane segment spans residues 213–245 (LGIETLLFMVLDVTAKVGFGFILLRSRAILGDT). Position 228 is an N6-(retinylidene)lysine (K228). Over 246 to 260 (EAPEPSAGAEASAAD) the chain is Cytoplasmic.

The protein belongs to the archaeal/bacterial/fungal opsin family.

Its subcellular location is the cell membrane. Its function is as follows. Light-driven proton pump. It may interact with bacterioruberin in the claret membrane. This Halorubrum ezzemoulense (Halorubrum chaoviator) protein is Archaerhodopsin-1.